The primary structure comprises 401 residues: 1-deoxy-D-xylulose 5-phosphate reductoisomerase (401 aa).

Thr-11, Gly-12, Ser-13, Ile-14, Arg-38, Asn-39, and Asn-125 together coordinate NADPH. Lys-126 is a 1-deoxy-D-xylulose 5-phosphate binding site. Glu-127 is a binding site for NADPH. Asp-151 contacts Mn(2+). 1-deoxy-D-xylulose 5-phosphate is bound by residues Ser-152, Glu-153, Ser-179, and His-202. Glu-153 contributes to the Mn(2+) binding site. Residue Gly-208 participates in NADPH binding. 4 residues coordinate 1-deoxy-D-xylulose 5-phosphate: Ser-215, Asn-220, Lys-221, and Glu-224. Residue Glu-224 participates in Mn(2+) binding.

This sequence belongs to the DXR family. It depends on Mg(2+) as a cofactor. Mn(2+) is required as a cofactor.

It carries out the reaction 2-C-methyl-D-erythritol 4-phosphate + NADP(+) = 1-deoxy-D-xylulose 5-phosphate + NADPH + H(+). It functions in the pathway isoprenoid biosynthesis; isopentenyl diphosphate biosynthesis via DXP pathway; isopentenyl diphosphate from 1-deoxy-D-xylulose 5-phosphate: step 1/6. In terms of biological role, catalyzes the NADPH-dependent rearrangement and reduction of 1-deoxy-D-xylulose-5-phosphate (DXP) to 2-C-methyl-D-erythritol 4-phosphate (MEP). The protein is 1-deoxy-D-xylulose 5-phosphate reductoisomerase of Paraburkholderia phymatum (strain DSM 17167 / CIP 108236 / LMG 21445 / STM815) (Burkholderia phymatum).